Consider the following 336-residue polypeptide: Eukaryotic translation initiation factor 3 subunit H (336 aa).

Residues 21-154 (VQCDGLAAMK…LKAYRLTPQA (134 aa)) enclose the MPN domain.

Belongs to the eIF-3 subunit H family. Component of the eukaryotic translation initiation factor 3 (eIF-3) complex.

It is found in the cytoplasm. Functionally, component of the eukaryotic translation initiation factor 3 (eIF-3) complex, which is involved in protein synthesis of a specialized repertoire of mRNAs and, together with other initiation factors, stimulates binding of mRNA and methionyl-tRNAi to the 40S ribosome. The eIF-3 complex specifically targets and initiates translation of a subset of mRNAs involved in cell proliferation. The polypeptide is Eukaryotic translation initiation factor 3 subunit H (Aedes aegypti (Yellowfever mosquito)).